We begin with the raw amino-acid sequence, 268 residues long: Nitrite transporter NirC (268 aa).

Topologically, residues 1 to 25 (MFTDTINKCAANAARIARLSANNPL) are cytoplasmic. The chain crosses the membrane as a helical span at residues 26 to 46 (GFWVSSAMAGAYVGLGIILIF). Residues 47–59 (TLGNLLDPSVRPL) are Periplasmic-facing. Residues 60–80 (VMGATFGIALTLVIIAGSELF) form a helical membrane-spanning segment. Residues 81–112 (TGHTMFLTFGVKAGSISHGQMWAILPQTWLGN) lie on the Cytoplasmic side of the membrane. The helical transmembrane segment at 113–133 (LVGSVFVAMLYSWGGGSLLPV) threads the bilayer. At 134 to 151 (DTSIVHSVALAKTTAPAM) the chain is on the periplasmic side. A helical membrane pass occupies residues 152 to 172 (VLFFKGALCNWLVCLAIWMAL). At 173 to 179 (RTEGAAK) the chain is on the cytoplasmic side. The helical transmembrane segment at 180–200 (FIAIWWCLLAFIASGYEHSIA) threads the bilayer. Over 201 to 225 (NMTLFALSWFGNHSEAYTLAGIGHN) the chain is Periplasmic. The helical transmembrane segment at 226–246 (LLWVTLGNTLSGAVFMGLGYW) threads the bilayer. At 247–268 (YATPKANRPVADKFNQTETAAG) the chain is on the cytoplasmic side.

The protein belongs to the FNT transporter (TC 1.A.16) family.

Its subcellular location is the cell inner membrane. Its function is as follows. Catalyzes nitrite uptake and nitrite export across the cytoplasmic membrane. Is up to 10-fold more active than NarK or NarU in nitrite uptake for subsequent reduction in the cytoplasm by the NirB/NirD nitrite reductase. In Escherichia coli (strain K12), this protein is Nitrite transporter NirC (nirC).